Consider the following 97-residue polypeptide: Mapk-regulated corepressor-interacting protein 1 (97 aa).

Polar residues predominate over residues Met1–Glu26. Disordered stretches follow at residues Met1–Leu27 and Gln54–Ser97. Basic and acidic residues-rich tracts occupy residues Gln54–Glu68 and Ser84–Ser97. The PXDLS motif signature appears at Pro80–Ser84.

This sequence belongs to the MCRIP family.

The protein resides in the nucleus. It is found in the cytoplasm. It localises to the stress granule. May play a role in the regulation of the epithelial-mesenchymal transition. This is Mapk-regulated corepressor-interacting protein 1 (mcrip1) from Danio rerio (Zebrafish).